The primary structure comprises 953 residues: Coiled-coil domain-containing protein 14 (953 aa).

Over residues 1–21 the composition is skewed to basic residues; sequence MKRGIRRDPFRKRKLGGRAKK. Disordered regions lie at residues 1–22 and 52–72; these read MKRG…AKKV and SGAR…AKLT. Position 124 is a phosphoserine (S124). 2 disordered regions span residues 126–189 and 268–287; these read SETA…TSDL and PPCP…SQFA. The segment covering 145 to 154 has biased composition (basic residues); sequence YGSKKKRHEK. Residues 169–187 show a composition bias toward basic and acidic residues; sequence DNKKQIPNEASARSERDTS. Over residues 277–287 the composition is skewed to polar residues; it reads EVQTDGNSQFA. Coiled coils occupy residues 383-413 and 483-618; these read LATN…RDTK and AMQP…AEKE. Phosphoserine is present on residues S670, S754, and S798.

Interacts with CEP63.

It is found in the cytoplasm. The protein resides in the cytoskeleton. Its subcellular location is the microtubule organizing center. It localises to the centrosome. The protein localises to the centriolar satellite. In terms of biological role, negatively regulates centriole duplication. Negatively regulates CEP63 and CDK2 centrosomal localization. In Homo sapiens (Human), this protein is Coiled-coil domain-containing protein 14 (CCDC14).